A 602-amino-acid chain; its full sequence is Elongation factor 4 (602 aa).

The tr-type G domain maps to arginine 7–glutamine 189. GTP-binding positions include aspartate 19–threonine 24 and asparagine 136–aspartate 139.

Belongs to the TRAFAC class translation factor GTPase superfamily. Classic translation factor GTPase family. LepA subfamily.

It localises to the cell inner membrane. The enzyme catalyses GTP + H2O = GDP + phosphate + H(+). Required for accurate and efficient protein synthesis under certain stress conditions. May act as a fidelity factor of the translation reaction, by catalyzing a one-codon backward translocation of tRNAs on improperly translocated ribosomes. Back-translocation proceeds from a post-translocation (POST) complex to a pre-translocation (PRE) complex, thus giving elongation factor G a second chance to translocate the tRNAs correctly. Binds to ribosomes in a GTP-dependent manner. The protein is Elongation factor 4 of Xylella fastidiosa (strain 9a5c).